Consider the following 507-residue polypeptide: Cytochrome c-type protein ImcH (507 aa).

Transmembrane regions (helical) follow at residues 14 to 34, 45 to 65, and 100 to 120; these read ISLI…AFIA, YIGL…LILV, and LFIF…VASI. Residues Cys132, Cys136, Met140, His152, Cys157, Cys160, His161, Asp400, Cys449, Cys452, His453, Cys487, Cys490, His491, and Glu496 each coordinate heme.

This sequence belongs to the NapC/NirT/NrfH family. Post-translationally, binds 4 heme c groups covalently per subunit.

The protein localises to the cell inner membrane. Its function is as follows. Redox protein involved in a high-potential metal respiratory pathway. Is required only for electron transfer to terminal extracellular electron acceptors with redox potentials higher than -0.1 V. ImcH likely transfers electrons from the quinone pool to a periplasmic acceptor. The sequence is that of Cytochrome c-type protein ImcH from Geobacter sulfurreducens (strain ATCC 51573 / DSM 12127 / PCA).